The sequence spans 188 residues: ATP synthase subunit b 1 (188 aa).

A helical transmembrane segment spans residues 35–55; it reads VHFSSHFFWLAISFGFFYLFI.

This sequence belongs to the ATPase B chain family. In terms of assembly, F-type ATPases have 2 components, F(1) - the catalytic core - and F(0) - the membrane proton channel. F(1) has five subunits: alpha(3), beta(3), gamma(1), delta(1), epsilon(1). F(0) has three main subunits: a(1), b(2) and c(10-14). The alpha and beta chains form an alternating ring which encloses part of the gamma chain. F(1) is attached to F(0) by a central stalk formed by the gamma and epsilon chains, while a peripheral stalk is formed by the delta and b chains.

The protein resides in the cell inner membrane. Functionally, f(1)F(0) ATP synthase produces ATP from ADP in the presence of a proton or sodium gradient. F-type ATPases consist of two structural domains, F(1) containing the extramembraneous catalytic core and F(0) containing the membrane proton channel, linked together by a central stalk and a peripheral stalk. During catalysis, ATP synthesis in the catalytic domain of F(1) is coupled via a rotary mechanism of the central stalk subunits to proton translocation. Component of the F(0) channel, it forms part of the peripheral stalk, linking F(1) to F(0). This Bartonella tribocorum (strain CIP 105476 / IBS 506) protein is ATP synthase subunit b 1.